A 171-amino-acid polypeptide reads, in one-letter code: Co-chaperone protein HscB (171 aa).

Residues 2–74 (DYFTLFGLPA…LTRAEYLLSL (73 aa)) form the J domain.

Belongs to the HscB family. Interacts with HscA and stimulates its ATPase activity. Interacts with IscU.

Its function is as follows. Co-chaperone involved in the maturation of iron-sulfur cluster-containing proteins. Seems to help targeting proteins to be folded toward HscA. This Salmonella heidelberg (strain SL476) protein is Co-chaperone protein HscB.